A 211-amino-acid polypeptide reads, in one-letter code: MTKVLFITANPNSAEGSFGMAVGEAFIEAYKNEHPQDEVVTIDLFNTTVPAIDADVFAAWGKFAAGEGFEALTEAQQQKVAAMNTNLETFMHADRYVFVTPMWNFSYPPVVKAYLDNLAIAGKTFKYTENGPVGLLEGKKALHIQATGGVYSEGPYAAVDFGRNHLKTVLGFIGVNETEYIAVEGMNANPEKAQEIKEAAIANARELAKRF.

102–105 (MWNF) is a binding site for FMN.

The protein belongs to the azoreductase type 1 family. As to quaternary structure, homodimer. It depends on FMN as a cofactor.

The enzyme catalyses 2 a quinone + NADH + H(+) = 2 a 1,4-benzosemiquinone + NAD(+). The catalysed reaction is N,N-dimethyl-1,4-phenylenediamine + anthranilate + 2 NAD(+) = 2-(4-dimethylaminophenyl)diazenylbenzoate + 2 NADH + 2 H(+). Functionally, quinone reductase that provides resistance to thiol-specific stress caused by electrophilic quinones. Its function is as follows. Also exhibits azoreductase activity. Catalyzes the reductive cleavage of the azo bond in aromatic azo compounds to the corresponding amines. The sequence is that of FMN-dependent NADH:quinone oxidoreductase 2 from Bacillus thuringiensis subsp. konkukian (strain 97-27).